A 366-amino-acid chain; its full sequence is Hydroxyproline O-arabinosyltransferase 1 (366 aa).

A helical; Signal-anchor transmembrane segment spans residues Thr6 to Ile26.

In terms of tissue distribution, ubiquitous.

Its subcellular location is the golgi apparatus. The protein resides in the cis-Golgi network membrane. The enzyme catalyses trans-4-hydroxy-L-prolyl-[protein] + UDP-beta-L-arabinofuranose = O-(beta-L-arabinofuranosyl)-trans-4-hydroxy-L-prolyl-[protein] + UDP + H(+). Functionally, glycosyltransferase involved in the O-arabinosylation of several proteins including extensins and small signaling peptides. Catalyzes the transfer of the initial L-arabinose to the hydroxyl group of Hyp residues. Contributes redundantly with HPAT2 and HPAT3 to arabinosylation of EXT3. The polypeptide is Hydroxyproline O-arabinosyltransferase 1 (Arabidopsis thaliana (Mouse-ear cress)).